A 62-amino-acid chain; its full sequence is Ferredoxin-1 (62 aa).

4Fe-4S ferredoxin-type domains follow at residues 3–32 (WTVT…LQDG) and 33–62 (KAVP…VEEN). Residues cysteine 12 and cysteine 18 each coordinate [3Fe-4S] cluster. The [4Fe-4S] cluster site is built by cysteine 22, cysteine 42, cysteine 45, and cysteine 48. Cysteine 52 is a binding site for [3Fe-4S] cluster.

In terms of assembly, homodimer. [3Fe-4S] cluster is required as a cofactor. The cofactor is [4Fe-4S] cluster.

Its function is as follows. Ferredoxins are iron-sulfur proteins that transfer electrons in a wide variety of metabolic reactions. This ferredoxin serves as a carrier for pyruvate dehydrogenase. This chain is Ferredoxin-1, found in Nitratidesulfovibrio vulgaris (strain DSM 19637 / Miyazaki F) (Desulfovibrio vulgaris).